The sequence spans 592 residues: Aspartate--tRNA(Asp/Asn) ligase (592 aa).

Glu-176 lines the L-aspartate pocket. Residues 200–203 (QLYK) form an aspartate region. Arg-222 is a binding site for L-aspartate. ATP-binding positions include 222–224 (RDE) and Gln-231. His-452 lines the L-aspartate pocket. Glu-486 serves as a coordination point for ATP. Arg-493 serves as a coordination point for L-aspartate. 538–541 (GVDR) is an ATP binding site.

The protein belongs to the class-II aminoacyl-tRNA synthetase family. Type 1 subfamily. Homodimer.

Its subcellular location is the cytoplasm. The enzyme catalyses tRNA(Asx) + L-aspartate + ATP = L-aspartyl-tRNA(Asx) + AMP + diphosphate. Its function is as follows. Aspartyl-tRNA synthetase with relaxed tRNA specificity since it is able to aspartylate not only its cognate tRNA(Asp) but also tRNA(Asn). Reaction proceeds in two steps: L-aspartate is first activated by ATP to form Asp-AMP and then transferred to the acceptor end of tRNA(Asp/Asn). In Rhodopirellula baltica (strain DSM 10527 / NCIMB 13988 / SH1), this protein is Aspartate--tRNA(Asp/Asn) ligase.